Reading from the N-terminus, the 346-residue chain is Glycosyltransferase 1 domain-containing protein 1 (346 aa).

Residues 1 to 16 form the signal peptide; sequence MRLLFLAVLRPHTGNA.

It belongs to the glycosyltransferase group 1 family. Glycosyltransferase 4 subfamily.

Its subcellular location is the secreted. The sequence is that of Glycosyltransferase 1 domain-containing protein 1 (GLT1D1) from Homo sapiens (Human).